The sequence spans 204 residues: Peptide chain release factor homolog (204 aa).

The tract at residues 2–98 (ILLQLSSAQG…KNWFLGIGRF (97 aa)) is rRNA-recognition domain, N-terminus. A linker 1 region spans residues 99–107 (TADEQEQSD). Residues 108–161 (AIRYETLRSSGPGGQHVNKTDSAVRATHLASGISVKVQSERSQHANKRLARLLI) form a GGQ domain region. The GGQ motif motif lies at 120–122 (GGQ). Residues 162-179 (AWKLEQQQQENSAALKSQ) are linker 2. The tract at residues 180 to 204 (RRMFHHQIERGNPRRTFTGMAFIEG) is rRNA-recognition domain, C-terminus.

Belongs to the prokaryotic/mitochondrial release factor family. Found in the A site of damaged 70S ribosomes, but not in undamaged ribosomes. Contacts (damaged) 16S rRNA, 23S rRNA and ribosomal protein uS12, but not mRNA.

In terms of biological role, peptide chain release-like factor that acts on 70S ribosomes with specific damage to their decoding center (cleavage of 16S rRNA between adenine-1493 and guanosine-1494, E.coli 16S rRNA numbering). Probably acts as a peptidyl-tRNA hydrolase, allowing release of the nascent chain and dissociation of the 30S and 50S subunits. Can release mRNA as short as 19 nucleotides (nt, mRNA-19, which has a single amino acid in the P-site and only a single nt in the A-site) from the ribosome. This specific cleavage is inflicted by CdiA (ECL_04451) or by colicin E3-type (ColE3) proteins. In vivo the PrfH-RtcB2 pair restores growth in the presence of ribotoxins that specifically create this damage. In Escherichia coli (strain ATCC 25922 / DSM 1103 / LMG 8223 / NCIMB 12210 / NCTC 12241 / WDCM 00013 / Seattle 1946), this protein is Peptide chain release factor homolog.